We begin with the raw amino-acid sequence, 350 residues long: Sulfate-binding protein (350 aa).

The first 40 residues, 1–40 (MKTAWTRRSFLQSAALATATVITIAACGGNNQSSSGGSGQ), serve as a signal peptide directing secretion.

It belongs to the prokaryotic sulfate-binding protein family.

It localises to the periplasm. This protein specifically binds sulfate and is involved in its transmembrane transport. The sequence is that of Sulfate-binding protein (sbpA) from Synechococcus elongatus (strain ATCC 33912 / PCC 7942 / FACHB-805) (Anacystis nidulans R2).